The primary structure comprises 963 residues: Low-density lipoprotein receptor-related protein 8 (963 aa).

Positions 1–32 are cleaved as a signal peptide; it reads MGLPEPGPLRLLALLLLLLLLLLLQLQHLAAA. At 42–826 the chain is on the extracellular side; the sequence is GPAKDCEKDQ…SKMGSTVTAA (785 aa). LDL-receptor class A domains are found at residues 46-82, 85-123, 126-164, 166-202, 205-246, 258-295, and 298-334; these read DCEK…DDCP, TCAD…ATCT, VCPA…AGCA, LCAP…RGCA, ACGP…ELCG, ACAT…ADCP, and TCRG…AGCL. 27 cysteine pairs are disulfide-bonded: C47–C59, C54–C72, C66–C81, C86–C98, C93–C111, C105–C122, C127–C141, C134–C154, C148–C163, C167–C179, C174–C192, C186–C201, C206–C221, C213–C234, C228–C245, C259–C272, C267–C285, C279–C294, C299–C311, C306–C324, C318–C333, C340–C351, C347–C360, C362–C374, C380–C390, C386–C399, and C401–C414. Ca(2+) is bound by residues W64, D67, D69, D71, D77, and E78. A glycan (N-linked (GlcNAc...) asparagine) is linked at N176. The 40-residue stretch at 336–375 folds into the EGF-like 1 domain; sequence GLNECLHNNGGCSHICTDLKIGFECTCPAGFQLLDQKTCG. Residues 376–415 form the EGF-like 2; calcium-binding domain; the sequence is DIDECKDPDACSQICVNYKGYFKCECYPGYEMDLLTKNCK. N441 carries N-linked (GlcNAc...) asparagine glycosylation. LDL-receptor class B repeat units follow at residues 462 to 508, 509 to 551, 552 to 595, 596 to 639, and 640 to 681; these read NRIY…DWVH, KHIY…DPLR, GFMY…DLLS, QRLY…VFED, and KVFW…FHEL. N518 and N538 each carry an N-linked (GlcNAc...) asparagine glycan. Residues 740–798 are clustered O-linked oligosaccharides; it reads STSTTTLASTMTRTVPATTRAPGTTVHRSTYQNHSTETPSLTAAVPSSVSVPRAPSISP. Residues 754–815 form a disordered region; the sequence is VPATTRAPGT…SNHSQHYANE (62 aa). A compositionally biased stretch (polar residues) spans 765 to 777; sequence VHRSTYQNHSTET. N-linked (GlcNAc...) asparagine glycosylation occurs at N772. A compositionally biased stretch (low complexity) spans 778–799; the sequence is PSLTAAVPSSVSVPRAPSISPS. Polar residues predominate over residues 800–812; that stretch reads TLSPATSNHSQHY. N-linked (GlcNAc...) asparagine glycosylation is present at N807. A helical membrane pass occupies residues 827–847; that stretch reads VIGIIVPIVVIALLCMSGYLI. Over 848 to 963 the chain is Cytoplasmic; the sequence is WRNWKRKNTK…ALSLEDDGLP (116 aa).

It belongs to the LDLR family. Homooligomer. Interacts with VLDLR. Reelin associates with two or more receptor molecules. Interacts with DAB1 and JNK-interacting proteins. Interacts with SNX17. Interacts with PCSK9. Interacts with MDK; this interaction is calcium dependent. Interacts with CLU. As to quaternary structure, (Microbial infection) Interacts with Semliki Forest virus E2-E1 heterodimer; this interaction mediates viral entry to host cell. In terms of assembly, (Microbial infection) Interacts (via class A repeats) with Eastern equine encephalitis virus spike glycoprotein E2; this interaction mediates viral entry into host cell. O-glycosylated. Some alternatively spliced isoforms lack the O-linked sugar domain. In terms of processing, undergoes sequential, furin and gamma-secretase dependent, proteolytic processing, resulting in the extracellular release of the entire ligand-binding domain as a soluble polypeptide and in the intracellular domain (ICD) release into the cytoplasm. The gamma-secretase-dependent proteolytical processing occurs after the bulk of the extracellular domain has been shed, in a furin-dependent manner, in alternatively spliced isoforms carrying the furin cleavage site. Hypoglycosylation (mainly hypo-O-glycosylation) leads to increased extracellular cleavage, which in turn results in accelerating release of the intracellular domain (ICD) by the gamma-secretase. The resulting receptor fragment is able to inhibit Reelin signaling and in particular the Reelin-induced DAB1 phosphorylation. Post-translationally, tyrosine phosphorylated upon apoE binding. Ubiquitinated by MYLIP leading to degradation. Expressed mainly in brain and placenta. Also expressed in platelets and megakaryocytic cells. Not expressed in the liver.

The protein resides in the cell membrane. The protein localises to the secreted. Cell surface receptor for Reelin (RELN) and apolipoprotein E (apoE)-containing ligands. LRP8 participates in transmitting the extracellular Reelin signal to intracellular signaling processes, by binding to DAB1 on its cytoplasmic tail. Reelin acts via both the VLDL receptor (VLDLR) and LRP8 to regulate DAB1 tyrosine phosphorylation and microtubule function in neurons. LRP8 has higher affinity for Reelin than VLDLR. LRP8 is thus a key component of the Reelin pathway which governs neuronal layering of the forebrain during embryonic brain development. Binds the endoplasmic reticulum resident receptor-associated protein (RAP). Binds dimers of beta 2-glycoprotein I and may be involved in the suppression of platelet aggregation in the vasculature. Highly expressed in the initial segment of the epididymis, where it affects the functional expression of clusterin and phospholipid hydroperoxide glutathione peroxidase (PHGPx), two proteins required for sperm maturation. May also function as an endocytic receptor. Not required for endocytic uptake of SEPP1 in the kidney which is mediated by LRP2. Together with its ligand, apolipoprotein E (apoE), may indirectly play a role in the suppression of the innate immune response by controlling the survival of myeloid-derived suppressor cells. Its function is as follows. (Microbial infection) Acts as a receptor for Semliki Forest virus. This chain is Low-density lipoprotein receptor-related protein 8 (LRP8), found in Homo sapiens (Human).